Consider the following 638-residue polypeptide: Probable inactive receptor kinase At4g23740 (638 aa).

A signal peptide spans Met-1 to Ser-24. LRR repeat units follow at residues Ala-94–Lys-117, Asp-118–Val-139, Asn-142–Lys-165, Arg-166–Ser-188, and Ser-189–Asn-198. Residues Val-257–Leu-277 form a helical membrane-spanning segment. The 272-residue stretch at Arg-337–Val-608 folds into the Protein kinase domain. Phosphoserine is present on Ser-339. Leu-343 to Thr-351 is a binding site for ATP. Thr-360 is subject to Phosphothreonine. Residue Lys-365 participates in ATP binding. Phosphoserine occurs at positions 416 and 419. Phosphothreonine is present on residues Thr-436 and Thr-509. Ser-513 is subject to Phosphoserine. The segment at Arg-612–Ile-638 is disordered. The segment covering Thr-613–Ser-625 has biased composition (basic and acidic residues). The span at Asn-627–Ile-638 shows a compositional bias: polar residues.

It belongs to the protein kinase superfamily.

The protein resides in the membrane. The polypeptide is Probable inactive receptor kinase At4g23740 (Arabidopsis thaliana (Mouse-ear cress)).